A 247-amino-acid chain; its full sequence is MLLIPAIDLKDGQCVRLKQGDMDQATVFSEDPAAMARHWVEQGARRLHLVDLNGAFAGKPRNEAAVKAILAEVGDEIPVQLGGGIRDLGTIERWLDDGLSYVIIGTAAVKDPGFLRDACTAFGGHIIVGLDAKDGKVATDGWSKLSGHEVVDLAKKYEDYGVEGIIYTDIGRDGMLQGINIDATVKLAQSVKIPVIASGGLSNLKDIDHLCAVEEHGVEGVICGRAIYSGDLNFKEAQALADKLGAA.

Asp-8 acts as the Proton acceptor in catalysis. Asp-131 (proton donor) is an active-site residue.

This sequence belongs to the HisA/HisF family.

The protein localises to the cytoplasm. The enzyme catalyses 1-(5-phospho-beta-D-ribosyl)-5-[(5-phospho-beta-D-ribosylamino)methylideneamino]imidazole-4-carboxamide = 5-[(5-phospho-1-deoxy-D-ribulos-1-ylimino)methylamino]-1-(5-phospho-beta-D-ribosyl)imidazole-4-carboxamide. It functions in the pathway amino-acid biosynthesis; L-histidine biosynthesis; L-histidine from 5-phospho-alpha-D-ribose 1-diphosphate: step 4/9. This is 1-(5-phosphoribosyl)-5-[(5-phosphoribosylamino)methylideneamino] imidazole-4-carboxamide isomerase from Ralstonia pickettii (strain 12J).